The chain runs to 203 residues: MPIGVPKVPFRLPGEEDAVWIDVYNRLYRERLLFLGQQVDDEIANQLIGIMMYLNGEDESKDMYLYINSPGGAVLAGISVYDAMQFVVPDVHTICMGLAASMGSFILTGGEITKRIALPHARVMIHQPASSYYDGQAGECIMEAEEVLKLRDCITKVYVQRTGKPLWVISEDMERDVFMSAKEAKLYGIVDLVAIENNSTIKN.

The Nucleophile role is filled by serine 101. Histidine 126 is an active-site residue.

This sequence belongs to the peptidase S14 family. In terms of assembly, component of the chloroplastic Clp protease core complex.

It localises to the plastid. It is found in the chloroplast stroma. It carries out the reaction Hydrolysis of proteins to small peptides in the presence of ATP and magnesium. alpha-casein is the usual test substrate. In the absence of ATP, only oligopeptides shorter than five residues are hydrolyzed (such as succinyl-Leu-Tyr-|-NHMec, and Leu-Tyr-Leu-|-Tyr-Trp, in which cleavage of the -Tyr-|-Leu- and -Tyr-|-Trp bonds also occurs).. Cleaves peptides in various proteins in a process that requires ATP hydrolysis. Has a chymotrypsin-like activity. Plays a major role in the degradation of misfolded proteins. The protein is ATP-dependent Clp protease proteolytic subunit of Marchantia polymorpha (Common liverwort).